The sequence spans 276 residues: NADPH-dependent 7-cyano-7-deazaguanine reductase (276 aa).

83–85 (IES) is a binding site for substrate. Position 85 to 86 (85 to 86 (SK)) interacts with NADPH. Cys184 serves as the catalytic Thioimide intermediate. Catalysis depends on Asp191, which acts as the Proton donor. Substrate is bound at residue 223-224 (HE). An NADPH-binding site is contributed by 252-253 (RG).

It belongs to the GTP cyclohydrolase I family. QueF type 2 subfamily. As to quaternary structure, homodimer.

The protein localises to the cytoplasm. The catalysed reaction is 7-aminomethyl-7-carbaguanine + 2 NADP(+) = 7-cyano-7-deazaguanine + 2 NADPH + 3 H(+). The protein operates within tRNA modification; tRNA-queuosine biosynthesis. Catalyzes the NADPH-dependent reduction of 7-cyano-7-deazaguanine (preQ0) to 7-aminomethyl-7-deazaguanine (preQ1). The polypeptide is NADPH-dependent 7-cyano-7-deazaguanine reductase (Pseudomonas fluorescens (strain SBW25)).